Here is a 286-residue protein sequence, read N- to C-terminus: ATP synthase gamma chain (286 aa).

The protein belongs to the ATPase gamma chain family. In terms of assembly, F-type ATPases have 2 components, CF(1) - the catalytic core - and CF(0) - the membrane proton channel. CF(1) has five subunits: alpha(3), beta(3), gamma(1), delta(1), epsilon(1). CF(0) has three main subunits: a, b and c.

It is found in the cell inner membrane. Produces ATP from ADP in the presence of a proton gradient across the membrane. The gamma chain is believed to be important in regulating ATPase activity and the flow of protons through the CF(0) complex. The sequence is that of ATP synthase gamma chain from Alcanivorax borkumensis (strain ATCC 700651 / DSM 11573 / NCIMB 13689 / SK2).